Consider the following 429-residue polypeptide: Enolase (429 aa).

Glutamine 163 provides a ligand contact to (2R)-2-phosphoglycerate. Residue glutamate 205 is the Proton donor of the active site. The Mg(2+) site is built by aspartate 242, glutamate 285, and aspartate 312. (2R)-2-phosphoglycerate contacts are provided by lysine 337, arginine 366, serine 367, and lysine 388. Lysine 337 (proton acceptor) is an active-site residue.

The protein belongs to the enolase family. It depends on Mg(2+) as a cofactor.

The protein resides in the cytoplasm. It localises to the secreted. The protein localises to the cell surface. It catalyses the reaction (2R)-2-phosphoglycerate = phosphoenolpyruvate + H2O. It functions in the pathway carbohydrate degradation; glycolysis; pyruvate from D-glyceraldehyde 3-phosphate: step 4/5. Its function is as follows. Catalyzes the reversible conversion of 2-phosphoglycerate (2-PG) into phosphoenolpyruvate (PEP). It is essential for the degradation of carbohydrates via glycolysis. The chain is Enolase from Methylorubrum extorquens (strain CM4 / NCIMB 13688) (Methylobacterium extorquens).